We begin with the raw amino-acid sequence, 411 residues long: SKA complex subunit 3 (411 aa).

Phosphoserine is present on residues Ser-34, Ser-119, Ser-138, Ser-154, and Ser-158. A binds the NDC80 complex region spans residues 102–410 (YQARDKEDSG…GTRGAANKEN (309 aa)). A phosphothreonine mark is found at Thr-189 and Thr-216. Positions 195-410 (PSVQVLKTPR…GTRGAANKEN (216 aa)) are binds microtubules and contacts the microtubule-binding domain of SKA1. Ser-289 carries the post-translational modification Phosphoserine. Phosphothreonine is present on Thr-297. Ser-324 and Ser-352 each carry phosphoserine. The interval 349-410 (EPPSSAITSC…GTRGAANKEN (62 aa)) is required for localization to kinetochores. Thr-363 bears the Phosphothreonine mark.

The protein belongs to the SKA3 family. Component of the SKA complex, composed of SKA1, SKA2 and SKA3. The SKA complex is a homodimer organized around a central W-shaped coiled-coil structure, formed by the interacting domains of SKA1, SKA2, and SKA3, each end of the 'W' is extended further by the C-terminal microtubule-binding domains of SKA1 and SKA3; the complex forms extended structures on microtubules. Interacts with the NDC80-NUF2 heterodimer of the NDC80 complex (via coiled coils); the interaction localizes the SKA complex to the kinetochore and is required to establish kinetochore-microtubule end-on attachments. Interacts with polo-like kinase PLK1.

The protein resides in the cytoplasm. It localises to the cytoskeleton. It is found in the spindle. Its subcellular location is the chromosome. The protein localises to the centromere. The protein resides in the kinetochore. It localises to the microtubule organizing center. It is found in the centrosome. Functionally, component of the SKA complex, a microtubule plus end-binding complex of the outer kinetochore that stabilizes spindle microtubule-kinetochore attachments, promotes alignment of chromosomes at the mitotic spindle equator (chromosome congression) and assists suppression of the spindle assembly checkpoint. Kinetochores, consisting of a centromere-associated inner segment and a microtubule-contacting outer segment, play a crucial role in chromosome segregation by mediating the physical connection between centromeric DNA and spindle microtubules. The outer kinetochore is made up of the ten-subunit KMN network complex, comprising the MIS12, NDC80 and KNL1 complexes, and auxiliary microtubule-associated components such as the SKA complex; together they connect the outer kinetochore with the inner kinetochore, bind microtubules, and mediate interactions with mitotic checkpoint proteins that delay anaphase until chromosomes are bioriented on the spindle. The SKA complex is loaded onto bioriented kinetochores and it facilitates chromosome congression by stabilizing microtubules together with MAPRE1, and end-on attachment of the NDC80 complex to depolymerizing spindle microtubules, thereby assisting the poleward-moving kinetochore in withstanding microtubule pulling forces. The complex associates with dynamic microtubule plus-ends and can track both depolymerizing and elongating microtubules. The complex recruits protein phosphatase 1 (PP1) to the kinetochore in prometaphase and metaphase, to oppose spindle assembly checkpoint signaling and promote the onset of anaphase. Within the complex, binds microtubules but with a much lower affinity than SKA1. Promotes stability of the polo-like kinase PLK1 protein. During meiosis the SKA complex stabilizes the meiotic spindle and is required for its migration to the cortex. The sequence is that of SKA complex subunit 3 (Ska3) from Mus musculus (Mouse).